The following is a 73-amino-acid chain: Large ribosomal subunit protein bL31 (73 aa).

The protein belongs to the bacterial ribosomal protein bL31 family. Type A subfamily. In terms of assembly, part of the 50S ribosomal subunit.

Functionally, binds the 23S rRNA. This is Large ribosomal subunit protein bL31 (rpmE) from Jannaschia sp. (strain CCS1).